A 205-amino-acid polypeptide reads, in one-letter code: Ribosomal RNA large subunit methyltransferase E (205 aa).

S-adenosyl-L-methionine contacts are provided by Gly60, Trp62, Asp80, Asp96, and Asp121. Residue Lys161 is the Proton acceptor of the active site.

Belongs to the class I-like SAM-binding methyltransferase superfamily. RNA methyltransferase RlmE family.

Its subcellular location is the cytoplasm. It catalyses the reaction uridine(2552) in 23S rRNA + S-adenosyl-L-methionine = 2'-O-methyluridine(2552) in 23S rRNA + S-adenosyl-L-homocysteine + H(+). Functionally, specifically methylates the uridine in position 2552 of 23S rRNA at the 2'-O position of the ribose in the fully assembled 50S ribosomal subunit. The polypeptide is Ribosomal RNA large subunit methyltransferase E (Azoarcus sp. (strain BH72)).